Reading from the N-terminus, the 183-residue chain is Ribosome rescue factor SmrB (183 aa).

Residues 98–173 (LDLHGLTQLQ…GDAALLVLIE (76 aa)) enclose the Smr domain.

Belongs to the SmrB family. As to quaternary structure, associates with collided ribosomes, but not with correctly translating polysomes.

Functionally, acts as a ribosome collision sensor. Detects stalled/collided disomes (pairs of ribosomes where the leading ribosome is stalled and a second ribosome has collided with it) and endonucleolytically cleaves mRNA at the 5' boundary of the stalled ribosome. Stalled/collided disomes form a new interface (primarily via the 30S subunits) that binds SmrB. Cleaved mRNA becomes available for tmRNA ligation, leading to ribosomal subunit dissociation and rescue of stalled ribosomes. The chain is Ribosome rescue factor SmrB from Salmonella agona (strain SL483).